A 147-amino-acid polypeptide reads, in one-letter code: Large ribosomal subunit protein bL9 (147 aa).

Belongs to the bacterial ribosomal protein bL9 family.

Its function is as follows. Binds to the 23S rRNA. In Shouchella clausii (strain KSM-K16) (Alkalihalobacillus clausii), this protein is Large ribosomal subunit protein bL9.